The sequence spans 310 residues: Probable deoxyhypusine synthase (310 aa).

Catalysis depends on Lys284, which acts as the Nucleophile.

Belongs to the deoxyhypusine synthase family. Requires NAD(+) as cofactor.

The catalysed reaction is [eIF5A protein]-L-lysine + spermidine = [eIF5A protein]-deoxyhypusine + propane-1,3-diamine. Its pathway is protein modification; eIF5A hypusination. Functionally, catalyzes the NAD-dependent oxidative cleavage of spermidine and the subsequent transfer of the butylamine moiety of spermidine to the epsilon-amino group of a specific lysine residue of the eIF-5A precursor protein to form the intermediate deoxyhypusine residue. This chain is Probable deoxyhypusine synthase (dys), found in Thermoplasma acidophilum (strain ATCC 25905 / DSM 1728 / JCM 9062 / NBRC 15155 / AMRC-C165).